Consider the following 168-residue polypeptide: Transcription antitermination protein NusB (168 aa).

The protein belongs to the NusB family.

Its function is as follows. Involved in transcription antitermination. Required for transcription of ribosomal RNA (rRNA) genes. Binds specifically to the boxA antiterminator sequence of the ribosomal RNA (rrn) operons. The chain is Transcription antitermination protein NusB from Chlamydia trachomatis serovar A (strain ATCC VR-571B / DSM 19440 / HAR-13).